The primary structure comprises 937 residues: Translation initiation factor IF-2 (937 aa).

2 disordered regions span residues 61-156 (IQAN…KAKQ) and 171-274 (LTQS…SHKI). Positions 179-196 (AKKEISEVKKQEQEIKRH) are enriched in basic and acidic residues. The span at 197–208 (ENIKRRTGFRVI) shows a compositional bias: basic residues. The segment covering 237-252 (EDIKKEWQEKDKQEAK) has biased composition (basic and acidic residues). In terms of domain architecture, tr-type G spans 436-605 (ERPPVVTIMG…LIQADIMELK (170 aa)). The G1 stretch occupies residues 445 to 452 (GHVDHGKT). 445-452 (GHVDHGKT) is a GTP binding site. The segment at 470–474 (GITQH) is G2. A G3 region spans residues 491 to 494 (DTPG). GTP contacts are provided by residues 491 to 495 (DTPGH) and 545 to 548 (NKMD). Residues 545–548 (NKMD) form a G4 region. Positions 581 to 583 (SAK) are G5.

It belongs to the TRAFAC class translation factor GTPase superfamily. Classic translation factor GTPase family. IF-2 subfamily.

The protein localises to the cytoplasm. Functionally, one of the essential components for the initiation of protein synthesis. Protects formylmethionyl-tRNA from spontaneous hydrolysis and promotes its binding to the 30S ribosomal subunits. Also involved in the hydrolysis of GTP during the formation of the 70S ribosomal complex. The protein is Translation initiation factor IF-2 of Helicobacter pylori (strain G27).